The following is a 142-amino-acid chain: Large ribosomal subunit protein uL13 (142 aa).

The protein belongs to the universal ribosomal protein uL13 family. In terms of assembly, part of the 50S ribosomal subunit.

In terms of biological role, this protein is one of the early assembly proteins of the 50S ribosomal subunit, although it is not seen to bind rRNA by itself. It is important during the early stages of 50S assembly. The sequence is that of Large ribosomal subunit protein uL13 from Ralstonia nicotianae (strain ATCC BAA-1114 / GMI1000) (Ralstonia solanacearum).